Consider the following 152-residue polypeptide: Small ribosomal subunit protein uS15 (152 aa).

Over residues Met-1 to Arg-19 the composition is skewed to basic residues. The segment at Met-1–Thr-21 is disordered.

Belongs to the universal ribosomal protein uS15 family. In terms of assembly, part of the 30S ribosomal subunit.

This Methanocella arvoryzae (strain DSM 22066 / NBRC 105507 / MRE50) protein is Small ribosomal subunit protein uS15.